The chain runs to 311 residues: Probable dihydroorotate dehydrogenase A (fumarate) (311 aa).

Substrate is bound by residues lysine 45, 69-73, and asparagine 128; that span reads NSMGL. Residue 45–46 participates in FMN binding; it reads KT. An FMN-binding site is contributed by asparagine 128. Cysteine 131 (nucleophile) is an active-site residue. Residues lysine 165 and valine 193 each contribute to the FMN site. 194–195 serves as a coordination point for substrate; the sequence is NS. FMN is bound by residues glycine 220, 248 to 249, and 270 to 271; these read GG and GT.

It belongs to the dihydroorotate dehydrogenase family. Type 1 subfamily. As to quaternary structure, homodimer. It depends on FMN as a cofactor.

Its subcellular location is the cytoplasm. The catalysed reaction is (S)-dihydroorotate + fumarate = orotate + succinate. Its pathway is pyrimidine metabolism; UMP biosynthesis via de novo pathway. In terms of biological role, catalyzes the conversion of dihydroorotate to orotate with fumarate as the electron acceptor. This Streptococcus pneumoniae (strain ATCC BAA-255 / R6) protein is Probable dihydroorotate dehydrogenase A (fumarate) (pyrDA).